We begin with the raw amino-acid sequence, 331 residues long: Eukaryotic translation initiation factor 3 subunit I (331 aa).

5 WD repeats span residues 8-47 (LHERPITQVLFNREGDLLFVAAKDKLVSLWYTTNGERIGS), 49-88 (QCGGVVYSIDVSQDSKYLITASADAKARVWDVSSGRQLDS), 142-181 (SPQCKITQATWGPLNKTIFASCEDGAVRIYCTEKRELIKT), 184-223 (DHNKLVTRIEWTKHRIMFMTCSKDGTAKLYDTKTLKLLRT), and 281-320 (GHIGPVHSICFTPDGKTFATGGEEGLVQVNHLDESYFEFD).

Belongs to the eIF-3 subunit I family. Component of the eukaryotic translation initiation factor 3 (eIF-3) complex.

It localises to the cytoplasm. In terms of biological role, component of the eukaryotic translation initiation factor 3 (eIF-3) complex, which is involved in protein synthesis of a specialized repertoire of mRNAs and, together with other initiation factors, stimulates binding of mRNA and methionyl-tRNAi to the 40S ribosome. The eIF-3 complex specifically targets and initiates translation of a subset of mRNAs involved in cell proliferation. The protein is Eukaryotic translation initiation factor 3 subunit I (eif3I) of Dictyostelium discoideum (Social amoeba).